Reading from the N-terminus, the 331-residue chain is Laforin (331 aa).

Residues 1–124 (MRFRFGVVVP…NNLVDGVYCL (124 aa)) enclose the CBM20 domain. S25 carries the phosphoserine; by AMPK modification. Substrate contacts are provided by residues W32, K87, 103–107 (GPHHD), D197, D235, and R241. A Tyrosine-protein phosphatase domain is found at 156–323 (HYSRILPNIW…QEDFFQKFGK (168 aa)). Catalysis depends on C266, which acts as the Phosphocysteine intermediate. Positions 266–272 (CNAGVGR) match the Glucan phosphatase signature motif CXAGXGR motif. Substrate is bound by residues 267-272 (NAGVGR) and Y304.

The protein belongs to the protein-tyrosine phosphatase family. As to quaternary structure, homodimer. Interacts with itself. Interacts with PPP1R3B, PPP1R3C, PPP1R3D, HIRIP5, and EPM2AIP1. Binds glycogen and Lafora bodies. Interacts with NHLRC1/malin (via the NHL repeats). Forms a complex with NHLRC1/malin and HSP70. Interacts with PPP1R3D; in the presence of NHLC1/malin the interaction leads to ubiquitination and autophagic degradation of PPP1R3D. Interacts (via the phosphatase domain) with MAPT/Tau; the interaction dephosphorylates MAPT. Isoform 1 and isoform 2 interact to form a heterodimeric complex that lacks phosphatase activity (in vitro). Active phosphatase isoform 7 and isoform 1 interact with each other, but give rise to lower phosphatase activity than isoform 1 or isoform 7 by themselves (in vitro). Active phosphatase isoform 7 and inactive isoform 2 interact with each other, but give rise to lower phosphatase activity than isoform 7 by itself (in vitro). Interacts with PRDM8. In terms of processing, polyubiquitinated by NHLRC1/malin. Post-translationally, phosphorylation on Ser-25 by AMPK affects the phosphatase activity of the enzyme and its ability to homodimerize and interact with NHLRC1, PPP1R3C or PRKAA2. Expressed in heart, skeletal muscle, kidney, pancreas and brain. Isoform 4 is also expressed in the placenta.

The protein localises to the cytoplasm. The protein resides in the endoplasmic reticulum membrane. It is found in the cell membrane. It localises to the nucleus. The catalysed reaction is O-phospho-L-tyrosyl-[protein] + H2O = L-tyrosyl-[protein] + phosphate. It carries out the reaction O-phospho-L-seryl-[protein] + H2O = L-seryl-[protein] + phosphate. It catalyses the reaction O-phospho-L-threonyl-[protein] + H2O = L-threonyl-[protein] + phosphate. Plays an important role in preventing glycogen hyperphosphorylation and the formation of insoluble aggregates, via its activity as glycogen phosphatase, and by promoting the ubiquitination of proteins involved in glycogen metabolism via its interaction with the E3 ubiquitin ligase NHLRC1/malin. Shows strong phosphatase activity towards complex carbohydrates in vitro, avoiding glycogen hyperphosphorylation which is associated with reduced branching and formation of insoluble aggregates. Dephosphorylates phosphotyrosine and synthetic substrates, such as para-nitrophenylphosphate (pNPP), and has low activity with phosphoserine and phosphothreonine substrates (in vitro). Has been shown to dephosphorylate MAPT. Forms a complex with NHLRC1/malin and HSP70, which suppresses the cellular toxicity of misfolded proteins by promoting their degradation through the ubiquitin-proteasome system (UPS). Acts as a scaffold protein to facilitate PPP1R3C/PTG ubiquitination by NHLRC1/malin. Also promotes proteasome-independent protein degradation through the macroautophagy pathway. In terms of biological role, does not bind to glycogen. Lacks phosphatase activity and might function as a dominant-negative regulator for the phosphatase activity of isoform 1 and isoform 7. Functionally, has phosphatase activity (in vitro). The protein is Laforin (EPM2A) of Homo sapiens (Human).